The sequence spans 135 residues: Transcriptional regulator HosA (135 aa).

The 131-residue stretch at 4 to 134 (RNKAFHQLRQ…FVQLVRKMMN (131 aa)) folds into the HTH marR-type domain. Positions 48-71 (QVALIEAAVSTKATLAEMLARMEN) form a DNA-binding region, H-T-H motif.

Involved in the temperature-dependent positive control of flagellum-driven swimming motility and cellular aggregation. Regulates fliC expression by directly interacting with fliC promoter. The polypeptide is Transcriptional regulator HosA (hosA) (Escherichia coli O157:H7).